The following is a 124-amino-acid chain: DRRQELSNENVLVKVSRRQLEELSKNAKSSSRRSVSSESGPFNLRSEDPLYSNNSGKFFELTPEKNQQLQDLDLFVNSVDLKEGSLLLPNYNSRALLVLVLVVNEGKGDFELVGQRNENQGKEN.

The interval 23–57 is disordered; sequence LSKNAKSSSRRSVSSESGPFNLRSEDPLYSNNSGK. Asn-53 is a glycosylation site (N-linked (GlcNAc...) asparagine).

It belongs to the 7S seed storage protein family.

Its subcellular location is the vacuole. The protein localises to the aleurone grain. Functionally, seed storage protein. This Pisum sativum (Garden pea) protein is Vicilin, 14 kDa component.